The sequence spans 247 residues: VQ motif-containing protein 4 (247 aa).

Residues 1–128 form a disordered region; the sequence is MENSPRYREA…SSSSASGFRL (128 aa). Ser-16 is modified (phosphoserine). Over residues 21–37 the composition is skewed to low complexity; it reads NSNNSCGMSSSSESNKP. Polar residues-rich tracts occupy residues 48-75 and 87-106; these read RSES…QMLT and LKPN…SSFS. Positions 67-76 match the VQ motif; sequence FKQVVQMLTG. 5 positions are modified to phosphoserine: Ser-106, Ser-155, Ser-163, Ser-165, and Ser-175. Thr-178 bears the Phosphothreonine mark. Residues 184–247 are disordered; the sequence is PFDRSGSSNQ…VSGSSSASTS (64 aa). Ser-194 carries the phosphoserine modification. A compositionally biased stretch (basic and acidic residues) spans 200 to 210; it reads AEEKAMKERGF. Ser-215 carries the phosphoserine modification. Phosphothreonine is present on residues Thr-219 and Thr-234. A phosphoserine mark is found at Ser-235, Ser-239, and Ser-243. The span at 236–247 shows a compositional bias: polar residues; that stretch reads PRVSGSSSASTS.

As to quaternary structure, interacts with MPK3 and MPK6. Post-translationally, phosphorylated on serine and threonine residues by MPK6 following treatment with the pathogen-associated molecular pattern (PAMP) flg22. MAP kinase-mediated phosphorylation after PAMP elicitation causes degradation of VQ4, allowing WRKY33 to promote transcription from defense genes.

The protein resides in the nucleus. Functionally, acts as a negative regulator of WRKY33 transcription factor activity in the promotion of defense gene expression. Acts as a negative regulator of pathogen-associated molecular pattern (PAMP)-induced responses to modulate resistance to pathogens. The chain is VQ motif-containing protein 4 from Arabidopsis thaliana (Mouse-ear cress).